We begin with the raw amino-acid sequence, 280 residues long: Polyamine aminopropyltransferase (280 aa).

Residues 3–237 (DVYFMERDPY…YWWSFSVGSK (235 aa)) form the PABS domain. Gln-33 contacts S-methyl-5'-thioadenosine. 2 residues coordinate spermidine: His-64 and Asp-88. Residues Asp-108 and 139 to 140 (DG) contribute to the S-methyl-5'-thioadenosine site. The Proton acceptor role is filled by Asp-157. Residue 157-160 (DSTD) coordinates spermidine.

This sequence belongs to the spermidine/spermine synthase family. In terms of assembly, homodimer or homotetramer.

Its subcellular location is the cytoplasm. The catalysed reaction is S-adenosyl 3-(methylsulfanyl)propylamine + putrescine = S-methyl-5'-thioadenosine + spermidine + H(+). It participates in amine and polyamine biosynthesis; spermidine biosynthesis; spermidine from putrescine: step 1/1. In terms of biological role, catalyzes the irreversible transfer of a propylamine group from the amino donor S-adenosylmethioninamine (decarboxy-AdoMet) to putrescine (1,4-diaminobutane) to yield spermidine. The protein is Polyamine aminopropyltransferase of Hydrogenobaculum sp. (strain Y04AAS1).